Reading from the N-terminus, the 119-residue chain is Large ribosomal subunit protein uL24 (119 aa).

It belongs to the universal ribosomal protein uL24 family. Part of the 50S ribosomal subunit.

Functionally, one of two assembly initiator proteins, it binds directly to the 5'-end of the 23S rRNA, where it nucleates assembly of the 50S subunit. One of the proteins that surrounds the polypeptide exit tunnel on the outside of the subunit. The sequence is that of Large ribosomal subunit protein uL24 from Arthrobacter sp. (strain FB24).